Consider the following 510-residue polypeptide: Leucine-rich repeat-containing protein 53 (510 aa).

LRR repeat units lie at residues 34–55 (TTRV…NLSL), 58–79 (NLAL…ALDG), 82–102 (MLRT…TDHT), 108–129 (SLQV…WFRN), 132–153 (GLTR…SFGG), 158–179 (SLRH…AFRP), and 182–203 (QLQE…FTPL). An LRRCT domain is found at 214-271 (NQWSCTCDLHPLARFLRNYIKSSAHTLRNAKDLNCQPSTAAVAAAQSVLRLSETNCDP). Residues 294-314 (LLTVLGFAGAVGLTCLGLVVF) form a helical membrane-spanning segment.

It localises to the membrane. The protein is Leucine-rich repeat-containing protein 53 (LRRC53) of Macaca fascicularis (Crab-eating macaque).